Reading from the N-terminus, the 591-residue chain is L-gulonolactone oxidase 2 (591 aa).

An N-terminal signal peptide occupies residues 1-27 (MAFTFPPSYRTLVGLYYIFTLMHTAVS). The FAD-binding PCMH-type domain occupies 56–238 (STCRAANVAY…SQVTFELQPM (183 aa)).

This sequence belongs to the oxygen-dependent FAD-linked oxidoreductase family. FAD serves as cofactor.

The enzyme catalyses L-gulono-1,4-lactone + O2 = L-ascorbate + H2O2 + H(+). It functions in the pathway cofactor biosynthesis; L-ascorbate biosynthesis. Catalyzes the oxidation of L-gulono-1,4-lactone to ascorbic acid. L-gulono-1,4-lactone is oxidized to hydrogen peroxide and L-xylo-hexulonolactone which spontaneously isomerizes to L-ascorbate. This Arabidopsis thaliana (Mouse-ear cress) protein is L-gulonolactone oxidase 2.